Here is a 51-residue protein sequence, read N- to C-terminus: UPF0391 membrane protein PsycPRwf_2202 (51 aa).

The next 2 helical transmembrane spans lie at 6-26 (IIFA…VAGL) and 27-47 (SQNF…IGFI).

The protein belongs to the UPF0391 family.

The protein localises to the cell membrane. In Psychrobacter sp. (strain PRwf-1), this protein is UPF0391 membrane protein PsycPRwf_2202.